The chain runs to 371 residues: Poly(rC)-binding protein 3 (371 aa).

3 consecutive KH domains span residues 45–95 (TLTI…TITG), 129–182 (PVTL…TISG), and 293–357 (ASTH…QYLI).

It is found in the cytoplasm. Its function is as follows. Single-stranded nucleic acid binding protein that binds preferentially to oligo dC. This Homo sapiens (Human) protein is Poly(rC)-binding protein 3.